The chain runs to 253 residues: Flagellar brake protein YcgR (253 aa).

One can recognise a PilZ domain in the interval 120–239; it reads QRRDFYRFAT…NEGLINRYVY (120 aa).

It belongs to the YcgR family. In terms of assembly, monomer. Interacts with the flagellar basal bodies.

The protein resides in the bacterial flagellum basal body. Acts as a flagellar brake, regulating swimming and swarming in a bis-(3'-5') cyclic diguanylic acid (c-di-GMP)-dependent manner. Binds 1 c-di-GMP dimer per subunit. Increasing levels of c-di-GMP lead to decreased motility. This Methylotenera mobilis (strain JLW8 / ATCC BAA-1282 / DSM 17540) protein is Flagellar brake protein YcgR.